Consider the following 231-residue polypeptide: Cytochrome c oxidase assembly factor 7 (231 aa).

5 Sel1-like repeats span residues 34–66 (PDGC…DQNE), 68–104 (SESC…NKGG), 108–145 (IDSC…DGNF), 146–182 (AASC…SLGH), and 183–218 (MWGC…DLHR).

Belongs to the hcp beta-lactamase family.

The protein localises to the mitochondrion intermembrane space. May be required for assembly of mitochondrial respiratory chain complexes. The protein is Cytochrome c oxidase assembly factor 7 (coa7) of Xenopus tropicalis (Western clawed frog).